The sequence spans 643 residues: Mediator of RNA polymerase II transcription subunit 17 (643 aa).

A disordered region spans residues 53 to 82 (SDSEEDGAERARAGREQWKQEPEEDEGQLK). Residues 60–73 (AERARAGREQWKQE) show a composition bias toward basic and acidic residues.

It belongs to the Mediator complex subunit 17 family. Component of the Mediator complex.

It localises to the nucleus. In terms of biological role, component of the Mediator complex, a coactivator involved in the regulated transcription of nearly all RNA polymerase II-dependent genes. Mediator functions as a bridge to convey information from gene-specific regulatory proteins to the basal RNA polymerase II transcription machinery. Mediator is recruited to promoters by direct interactions with regulatory proteins and serves as a scaffold for the assembly of a functional preinitiation complex with RNA polymerase II and the general transcription factors. This Danio rerio (Zebrafish) protein is Mediator of RNA polymerase II transcription subunit 17 (med17).